The following is a 177-amino-acid chain: ATP synthase subunit delta (177 aa).

It belongs to the ATPase delta chain family. As to quaternary structure, F-type ATPases have 2 components, F(1) - the catalytic core - and F(0) - the membrane proton channel. F(1) has five subunits: alpha(3), beta(3), gamma(1), delta(1), epsilon(1). F(0) has three main subunits: a(1), b(2) and c(10-14). The alpha and beta chains form an alternating ring which encloses part of the gamma chain. F(1) is attached to F(0) by a central stalk formed by the gamma and epsilon chains, while a peripheral stalk is formed by the delta and b chains.

The protein resides in the cell inner membrane. In terms of biological role, f(1)F(0) ATP synthase produces ATP from ADP in the presence of a proton or sodium gradient. F-type ATPases consist of two structural domains, F(1) containing the extramembraneous catalytic core and F(0) containing the membrane proton channel, linked together by a central stalk and a peripheral stalk. During catalysis, ATP synthesis in the catalytic domain of F(1) is coupled via a rotary mechanism of the central stalk subunits to proton translocation. Functionally, this protein is part of the stalk that links CF(0) to CF(1). It either transmits conformational changes from CF(0) to CF(1) or is implicated in proton conduction. In Neisseria meningitidis serogroup A / serotype 4A (strain DSM 15465 / Z2491), this protein is ATP synthase subunit delta.